We begin with the raw amino-acid sequence, 124 residues long: Aspartate 1-decarboxylase (124 aa).

The active-site Schiff-base intermediate with substrate; via pyruvic acid is the Ser-21. Residue Ser-21 is modified to Pyruvic acid (Ser). A substrate-binding site is contributed by Thr-53. The Proton donor role is filled by Tyr-54. 69 to 71 (GAA) serves as a coordination point for substrate.

It belongs to the PanD family. As to quaternary structure, heterooctamer of four alpha and four beta subunits. The cofactor is pyruvate. Post-translationally, is synthesized initially as an inactive proenzyme, which is activated by self-cleavage at a specific serine bond to produce a beta-subunit with a hydroxyl group at its C-terminus and an alpha-subunit with a pyruvoyl group at its N-terminus.

It is found in the cytoplasm. The catalysed reaction is L-aspartate + H(+) = beta-alanine + CO2. The protein operates within cofactor biosynthesis; (R)-pantothenate biosynthesis; beta-alanine from L-aspartate: step 1/1. Its function is as follows. Catalyzes the pyruvoyl-dependent decarboxylation of aspartate to produce beta-alanine. This is Aspartate 1-decarboxylase from Dehalococcoides mccartyi (strain ATCC BAA-2266 / KCTC 15142 / 195) (Dehalococcoides ethenogenes (strain 195)).